The sequence spans 146 residues: Allograft inflammatory factor 1 (146 aa).

Serine 1 is subject to N-acetylserine. Position 10 is an N6-acetyllysine (lysine 10). Serine 38 carries the phosphoserine modification. Positions 44 to 79 constitute an EF-hand 1 domain; sequence RKLEAFKQKYMEFDLNGNGDIDIMSLKRMLEKLGVP. Ca(2+)-binding residues include aspartate 57, asparagine 59, asparagine 61, aspartate 63, and threonine 99. An EF-hand 2; degenerate domain is found at 81–115; that stretch reads THLELKKLIKEVSSGSGETFSYSIFLKMMLGKRSA. The tract at residues 127-146 is disordered; the sequence is AREQEKPTGPPAKKAISELP.

In terms of assembly, homodimer (Potential). Monomer. Interacts with LCP1. As to expression, microglial cells in the central nervous system and dendritic cells and macrophages in several organs.

The protein localises to the cytoplasm. It is found in the cytoskeleton. Its subcellular location is the cell projection. The protein resides in the ruffle membrane. It localises to the phagocytic cup. In terms of biological role, actin-binding protein that enhances membrane ruffling and RAC activation. Enhances the actin-bundling activity of LCP1. Binds calcium. Plays a role in RAC signaling and in phagocytosis. May play a role in macrophage activation and function. Promotes the proliferation of vascular smooth muscle cells and of T-lymphocytes. Enhances lymphocyte migration. Plays a role in vascular inflammation. Has a dual influence on glucose-induced insulin secretion: inhibition at low concentration and stimulation at high concentrations. This is Allograft inflammatory factor 1 (AIF1) from Sus scrofa (Pig).